Here is a 982-residue protein sequence, read N- to C-terminus: Zinc finger and BTB domain-containing protein 4 (982 aa).

A BTB domain is found at 30 to 131; sequence CDVTLIAGDT…IYSARLALPG (102 aa). Lys40 participates in a covalent cross-link: Glycyl lysine isopeptide (Lys-Gly) (interchain with G-Cter in SUMO2). A disordered region spans residues 71 to 103; it reads TGGSAPSPATTTAASSSSSSPPPASPHSSSPPR. A compositionally biased stretch (low complexity) spans 74–89; sequence SAPSPATTTAASSSSS. Residues 165–324 form an interaction with CBFA2T3 region; that stretch reads VPPAPTSMVT…CRYCEKVFAL (160 aa). Residues 210–232 form a C2H2-type 1; atypical zinc finger; the sequence is FPCPRCGKSFIHPKRLQTHEAQC. The interval 234 to 255 is disordered; sequence RGSNTRGSAGLGPGVSGSGGPA. The span at 242 to 255 shows a compositional bias: gly residues; sequence AGLGPGVSGSGGPA. 3 consecutive C2H2-type zinc fingers follow at residues 285 to 307, 313 to 335, and 341 to 364; these read YVCA…SNVH, YPCR…EVWH, and YQCI…RAFH. Phosphoserine is present on Ser367. Residues 404-578 are disordered; the sequence is KTYSQGAPEA…QLQAPPPLCQ (175 aa). A compositionally biased stretch (pro residues) spans 430 to 446; sequence SPQPLPPPAPEPGPPPS. Positions 467-477 are enriched in gly residues; it reads AAGGGPAGTGG. Composition is skewed to low complexity over residues 478–488 and 507–529; these read SQAASVITYTT and ATPT…ATAT. Residue Lys548 forms a Glycyl lysine isopeptide (Lys-Gly) (interchain with G-Cter in SUMO2) linkage. Positions 552-565 are enriched in gly residues; sequence GLSGSGGSPTGTGR. Lys590 is covalently cross-linked (Glycyl lysine isopeptide (Lys-Gly) (interchain with G-Cter in SUMO2)). Residues 591–600 show a composition bias toward basic and acidic residues; sequence RRISETDLRP. Disordered stretches follow at residues 591-700, 715-738, 759-839, and 854-880; these read RRIS…ERRH, LRKH…SSTR, QRHA…GGGS, and GGSR…GDRM. A compositionally biased stretch (acidic residues) spans 604-627; that stretch reads SGEEVEESEEEEEEEEEEDQEEQE. Residues 628–637 are compositionally biased toward basic and acidic residues; that stretch reads ESKAGGEDQL. 2 C2H2-type zinc fingers span residues 700 to 722 and 739 to 761; these read HRCG…QEAH and FTCP…GQRH. Phosphothreonine; by HIPK2 is present on residues Thr769 and Thr771. Over residues 799 to 820 the composition is skewed to low complexity; sequence SSSSGEAGSGSAAAAEASESAS. Thr953 is subject to Phosphothreonine; by HIPK2.

Interacts with HIPK2. Interacts with CBFA2T3. Interacts with ZBTB38. Post-translationally, phosphorylated by HIPK2. This phosphorylation reduces stability and triggers ZBTB4 protein degradation in response to DNA damage. In terms of tissue distribution, expressed in adult and aged myogenic satellite cells.

The protein localises to the nucleus. Its subcellular location is the chromosome. Functionally, transcriptional repressor with bimodal DNA-binding specificity. Represses transcription in a methyl-CpG-dependent manner. Binds with a higher affinity to methylated CpG dinucleotides in the consensus sequence 5'-CGCG-3' but can also bind to the non-methylated consensus sequence 5'-CTGCNA-3' also known as the consensus kaiso binding site (KBS). Can also bind specifically to a single methyl-CpG pair and can bind hemimethylated DNA but with a lower affinity compared to methylated DNA. Plays a role in postnatal myogenesis, may be involved in the regulation of satellite cells self-renewal. The sequence is that of Zinc finger and BTB domain-containing protein 4 (Zbtb4) from Mus musculus (Mouse).